The sequence spans 187 residues: Elongation factor P (187 aa).

It belongs to the elongation factor P family.

It localises to the cytoplasm. It participates in protein biosynthesis; polypeptide chain elongation. Its function is as follows. Involved in peptide bond synthesis. Stimulates efficient translation and peptide-bond synthesis on native or reconstituted 70S ribosomes in vitro. Probably functions indirectly by altering the affinity of the ribosome for aminoacyl-tRNA, thus increasing their reactivity as acceptors for peptidyl transferase. This Arthrobacter sp. (strain FB24) protein is Elongation factor P.